The chain runs to 204 residues: MGAYRYVQELYRKKQSDVMRYLLRIRVWQYRQMTRFHRAPRPSRPDKARRLGYKAKQGFSIFRIRVRRGGRKRPVPKGCTYGKPKSHGVNQLKPYRCLQSVAEERVGRRLGGLRVLNSYWVAQDAAHKYFEVIMVDPAHNAIRRDPNVNWICNAVHKHRELRGLTSAGKSSRGLGKGYRYSQTIGGSRRACWRRRNRLHLRRYR.

This sequence belongs to the eukaryotic ribosomal protein eL15 family.

The polypeptide is Large ribosomal subunit protein eL15 (RpL15) (Anopheles gambiae (African malaria mosquito)).